The sequence spans 823 residues: Ubiquitin carboxyl-terminal hydrolase 16 (823 aa).

The segment at P22–A142 adopts a UBP-type zinc-finger fold. C24, H26, C48, C51, C74, C77, C82, H90, H94, H103, C116, and C119 together coordinate Zn(2+). A Glycyl lysine isopeptide (Lys-Gly) (interchain with G-Cter in SUMO2) cross-link involves residue K140. The disordered stretch occupies residues T146–S189. Positions P149–A181 are enriched in basic and acidic residues. S189 is subject to Phosphoserine. The USP domain maps to K196–I822. The active-site Nucleophile is the C205. Residues S394–V408 are compositionally biased toward basic and acidic residues. The disordered stretch occupies residues S394–I460. Positions E409–D420 are enriched in acidic residues. S415 carries the phosphoserine modification. The span at N421 to D430 shows a compositional bias: basic and acidic residues. Residues H438–Q458 show a composition bias toward basic residues. S531 and S552 each carry phosphoserine. A Phosphothreonine modification is found at T554. The active-site Proton acceptor is the H758.

This sequence belongs to the peptidase C19 family. USP16 subfamily. Homotetramer. Associates with late pre-40S ribosomes. Interacts with CEP78; promoting deubiquitination of tektins. In terms of processing, phosphorylated at the onset of mitosis and dephosphorylated during the metaphase/anaphase transition. Phosphorylation by AURKB enhances the deubiquitinase activity. As to expression, present in all the tissues examined including fetal brain, lung, liver, kidney, and adult heart, brain, placenta, lung, liver, skeletal muscle, kidney and pancreas.

Its subcellular location is the nucleus. It localises to the cytoplasm. The catalysed reaction is Thiol-dependent hydrolysis of ester, thioester, amide, peptide and isopeptide bonds formed by the C-terminal Gly of ubiquitin (a 76-residue protein attached to proteins as an intracellular targeting signal).. Specifically deubiquitinates 'Lys-120' of histone H2A (H2AK119Ub), a specific tag for epigenetic transcriptional repression, thereby acting as a coactivator. Deubiquitination of histone H2A is a prerequisite for subsequent phosphorylation at 'Ser-11' of histone H3 (H3S10ph), and is required for chromosome segregation when cells enter into mitosis. In resting B- and T-lymphocytes, phosphorylation by AURKB leads to enhance its activity, thereby maintaining transcription in resting lymphocytes. Regulates Hox gene expression via histone H2A deubiquitination. Prefers nucleosomal substrates. Does not deubiquitinate histone H2B. Also deubiquitinates non-histone proteins, such as ribosomal protein RPS27A: deubiquitination of monoubiquitinated RPS27A promotes maturation of the 40S ribosomal subunit. Also mediates deubiquitination of tektin proteins (TEKT1, TEKT2, TEK3, TEKT4 and TEKT5), promoting their stability. The protein is Ubiquitin carboxyl-terminal hydrolase 16 of Homo sapiens (Human).